Consider the following 680-residue polypeptide: HEAT repeat-containing protein 3 (680 aa).

Over residues 1–11 (MGKSRTKRFKR) the composition is skewed to basic residues. Positions 1-39 (MGKSRTKRFKRPQFSPTGDCQAEAAAAANGTGGEEDDGP) are disordered. Ser15 carries the phosphoserine modification. The segment covering 18-29 (GDCQAEAAAAAN) has biased composition (low complexity). 2 HEAT repeats span residues 38–69 (GPAAELLEKLQHPSAEVRECACAGLARLVQQR) and 74–110 (GLARRDAVRRLGPLLLDPSLAVRETAAGALRNLSACG). Residue Ser144 is modified to Phosphoserine. Thr340 carries the phosphothreonine modification.

Belongs to the nuclear import and ribosome assembly adapter family. In terms of assembly, component of a hexameric 5S RNP precursor complex, composed of 5S RNA, RRS1, RPF2/BXDC1, RPL5, RPL11 and HEATR3; this complex acts as a precursor for ribosome assembly.

Functionally, plays a role in ribosome biogenesis and in nuclear import of the 60S ribosomal protein L5/large ribosomal subunit protein uL18 (RPL5). Required for proper erythrocyte maturation. This chain is HEAT repeat-containing protein 3 (HEATR3), found in Homo sapiens (Human).